Here is a 258-residue protein sequence, read N- to C-terminus: 5'-nucleotidase SurE (258 aa).

A divalent metal cation-binding residues include Asp8, Asp9, Ser40, and Asn98.

It belongs to the SurE nucleotidase family. A divalent metal cation is required as a cofactor.

The protein resides in the cytoplasm. The catalysed reaction is a ribonucleoside 5'-phosphate + H2O = a ribonucleoside + phosphate. In terms of biological role, nucleotidase that shows phosphatase activity on nucleoside 5'-monophosphates. In Synechococcus elongatus (strain ATCC 33912 / PCC 7942 / FACHB-805) (Anacystis nidulans R2), this protein is 5'-nucleotidase SurE.